The sequence spans 790 residues: Type VI secretion system spike protein VgrG5 (790 aa).

2 stretches are compositionally biased toward basic and acidic residues: residues 753-763 (GFRDYRAEMPQ) and 772-790 (AYRRDASRPGAADKDEPTP). A disordered region spans residues 753 to 790 (GFRDYRAEMPQHKPRSAPDAYRRDASRPGAADKDEPTP).

It belongs to the VgrG protein family.

It is found in the secreted. Part of the H2 type VI secretion system (H2-T6SS) specialized secretion system, which delivers several virulence factors in both prokaryotic and eukaryotic cells during infection. Allows the delivery of the phospholipase effector PldB to target cells where it exerts its toxicity. Also plays a role in VgrG4b and its effector PldA secretion. The polypeptide is Type VI secretion system spike protein VgrG5 (Pseudomonas aeruginosa (strain ATCC 15692 / DSM 22644 / CIP 104116 / JCM 14847 / LMG 12228 / 1C / PRS 101 / PAO1)).